The following is a 122-amino-acid chain: Glycine cleavage system H protein (122 aa).

The region spanning 19–101 (VVTVGITNYA…EKEGWLWKMT (83 aa)) is the Lipoyl-binding domain. K60 is modified (N6-lipoyllysine).

The protein belongs to the GcvH family. As to quaternary structure, the glycine cleavage system is composed of four proteins: P, T, L and H. (R)-lipoate is required as a cofactor.

The glycine cleavage system catalyzes the degradation of glycine. The H protein shuttles the methylamine group of glycine from the P protein to the T protein. The protein is Glycine cleavage system H protein of Bartonella quintana (strain Toulouse) (Rochalimaea quintana).